A 227-amino-acid chain; its full sequence is Lipoprotein-releasing system ATP-binding protein LolD (227 aa).

The ABC transporter domain maps to 7 to 227; that stretch reads LSCRNLGKSY…RLEGGRLVEA (221 aa). 43–50 contributes to the ATP binding site; the sequence is GTSGSGKS.

Belongs to the ABC transporter superfamily. Lipoprotein translocase (TC 3.A.1.125) family. As to quaternary structure, the complex is composed of two ATP-binding proteins (LolD) and two transmembrane proteins (LolC and LolE).

It localises to the cell inner membrane. Its function is as follows. Part of the ABC transporter complex LolCDE involved in the translocation of mature outer membrane-directed lipoproteins, from the inner membrane to the periplasmic chaperone, LolA. Responsible for the formation of the LolA-lipoprotein complex in an ATP-dependent manner. This Pseudomonas syringae pv. tomato (strain ATCC BAA-871 / DC3000) protein is Lipoprotein-releasing system ATP-binding protein LolD.